The primary structure comprises 654 residues: Neuroendocrine convertase 2 (654 aa).

The signal sequence occupies residues 1–21; it reads MAAATWSWLLAPFLLLHWASA. The propeptide occupies 22–121; it reads GAGGGAGGSG…VQQPGFKRVK (100 aa). Positions 158–483 constitute a Peptidase S8 domain; sequence QWYLKNTGQN…FGVLDAGAMV (326 aa). The N-linked (GlcNAc...) asparagine glycan is linked to asparagine 189. Catalysis depends on charge relay system residues aspartate 196 and histidine 237. 2 disulfides stabilise this stretch: cysteine 254–cysteine 404 and cysteine 346–cysteine 376. The N-linked (GlcNAc...) asparagine glycan is linked to asparagine 312. The active-site Charge relay system is the serine 412. The region spanning 491-627 is the P/Homo B domain; the sequence is SVPPRYHCEA…SLVLHGTKEA (137 aa). A disulfide bond links cysteine 498 and cysteine 524. A glycan (N-linked (GlcNAc...) asparagine) is linked at asparagine 544.

The protein belongs to the peptidase S8 family. Furin subfamily. Expressed in the central nervous system (CNS) and midgut endocrine cells of third instar larva (at protein level). In the CNS, expressed in the CA-LP1 and CA-LP2 neurons which innervate the corpus allatum, and in the CC-MS2 neurons which innervate the corpora cardiaca of the ring gland. Also expressed in the CC-MS1, SP3, Tv and Va neurons. Expressed in Akh-producing cells of the corpora cardiaca. In the embryo, restricted to the final stages of embryogenesis where expression is found in anterior sensory structures and in only 168 cells in the brain and ventral nerve cord. After larvae hatch, the sensory structures and most cells in the CNS turn off or substantially reduce expression. In third instar larva, expressed at higher levels in the anterior section than in the posterior section. Little expression is detected in the adult head. In the developing eye, expressed at higher levels in pale-type R7 photoreceptor cells than in yellow-type R7 cells although expression is not seen in all pale-type R7 cells. Also expressed in outer photoreceptor cells.

The protein resides in the secreted. It catalyses the reaction Release of protein hormones and neuropeptides from their precursors, generally by hydrolysis of -Lys-Arg-|- bonds.. Serine endopeptidase which is involved in the processing of hormone and other protein precursors at sites comprised of pairs of basic amino acid residues. Required during embryonic and larval development, probably by proteolytically processing peptide hormones involved in hatching, larval growth and larval molting. Required for the processing and activation of Akh which maintains normal hemolymph sugar levels. Has been shown in one study to be required for processing of sli into slit N-product and slit C-product in the embryo which is necessary for lateral transverse muscle elongation but has been shown in another study not to be required for sli cleavage. Required for larval hatching. Also required for normal larval wandering behavior which occurs prior to pupariation. Required during pupal development for head eversion, leg and wing disk extension, and abdominal differentiation. Required during eye development for R8 photoreceptor cell specification by regulating processing of ligands required for the BMP and activin signaling pathways. The protein is Neuroendocrine convertase 2 of Drosophila melanogaster (Fruit fly).